Reading from the N-terminus, the 985-residue chain is Ankyrin repeat domain-containing protein 24 (985 aa).

ANK repeat units lie at residues 52 to 81, 85 to 114, 118 to 147, 151 to 180, and 184 to 213; these read EGKS…DVMS, AGYN…VVDI, SGWT…HMNP, SGAT…ATND, and QGRT…QLSI. Disordered regions lie at residues 243–293, 311–360, 386–412, 476–503, and 594–614; these read RSSP…DRDA, IRGL…LGRE, QDEE…SAEE, YTEA…TAYQ, and DNAE…NPGM. A coiled-coil region spans residues 291-488; sequence RDAYEEIVRL…AMHSQQQQQE (198 aa). 2 stretches are compositionally biased toward basic and acidic residues: residues 311–326 and 349–360; these read IRGL…KEPL and EKQEEKESLGRE.

In terms of assembly, homodimer. Interacts (via C-terminal domain) with TRIOBP (via C-terminal domain) isoform 4; recruits TRIOBP isoform 4 to stereocilia rootlets. As to expression, expressed in vestibular hair bundles.

Its subcellular location is the cell membrane. The protein localises to the cell projection. The protein resides in the stereocilium. In terms of biological role, component of the stereocilia rootlet in hair cells of inner ear. Bridges the apical plasma membrane with the lower rootlet and maintains normal distribution of TRIOBP, thereby reinforcing stereocilia insertion points and organizing rootlets for hearing with long-term resilience. The sequence is that of Ankyrin repeat domain-containing protein 24 (Ankrd24) from Mus musculus (Mouse).